Reading from the N-terminus, the 298-residue chain is Small ribosomal subunit biogenesis GTPase RsgA (298 aa).

The 162-residue stretch at 67–228 (TNELIRPPIC…VADTPGFSSL (162 aa)) folds into the CP-type G domain. 116–119 (TKMD) lines the GTP pocket. T166 is subject to Phosphothreonine. Residue 171 to 179 (GQSGVGKSS) coordinates GTP. Zn(2+) contacts are provided by C252, C257, H259, and C265.

The protein belongs to the TRAFAC class YlqF/YawG GTPase family. RsgA subfamily. As to quaternary structure, monomer, but able to form dimers. Associates with 30S ribosomal subunit; a phospho-mimetic mutation increases association. Probably binds 16S rRNA. The cofactor is Zn(2+). Post-translationally, in vitro phosphorylated mostly on Thr (with lower signal on Ser) by PrkC in the presence of poly-L-Lys or myelin basic protein, dephosphorylated by PrpC. Most in vitro phosphorylation occurs on Thr-166, in vivo phosphorylation has not been detected, but it might vary during the cell cycle.

It is found in the cytoplasm. Its function is as follows. One of several proteins that assist in the late maturation steps of the functional core of the 30S ribosomal subunit. Helps release RbfA from mature subunits. May play a role in the assembly of ribosomal proteins into the subunit. Circularly permuted GTPase with a low level of activity and slow catalytic turnover, does not act on ATP. GTPase activity is stimulated by the presence of 30S or 70S ribosomes, phosphorylation increases stimulation. Depletion results in increased sensitivity to protein synthesis inhibitors that block the peptide channel or peptidyl transferase center on the ribosome, suggesting this protein functions in conjunction with the ribosome in vivo. Decreasing levels of protein lead to an increase in free 30S and 50S ribosomal subunits and a decrease in assembled 70S ribosomes. Suggested to serve as a specific transcription factor for proteins involved in late stages of peptidoglycan synthesis. This Bacillus subtilis (strain 168) protein is Small ribosomal subunit biogenesis GTPase RsgA.